The sequence spans 308 residues: D-2-hydroxyacid dehydrogenase (308 aa).

NAD(+) is bound by residues threonine 145–leucine 146, valine 224–arginine 226, and aspartate 250. Arginine 226 is an active-site residue. Residue glutamate 255 is part of the active site. Histidine 274 acts as the Proton donor in catalysis. NAD(+) is bound at residue histidine 274–alanine 277.

Belongs to the D-isomer specific 2-hydroxyacid dehydrogenase family. Homotetramer.

In terms of biological role, catalyzes the stereospecific NAD(P)H-dependent reduction of 2-ketocarboxylic acids into the corresponding D-2-hydroxycarboxylic acids. Can use both NADPH or NADH as reductant, displaying a marked preference for NADPH over NADH. Shows a broad substrate specificity, although it displays a marked preference for the 2-ketocarboxylic acids having an unbranched chain of 4-5 carbon atoms. This Haloferax mediterranei (strain ATCC 33500 / DSM 1411 / JCM 8866 / NBRC 14739 / NCIMB 2177 / R-4) (Halobacterium mediterranei) protein is D-2-hydroxyacid dehydrogenase (ddh).